The following is a 133-amino-acid chain: Small ribosomal subunit protein uS12 (133 aa).

Residue aspartate 89 is modified to 3-methylthioaspartic acid. The tract at residues 103–133 (DTAGVAGRTQRRSKYGAKRPKPGQAAPAKKK) is disordered. The span at 111-123 (TQRRSKYGAKRPK) shows a compositional bias: basic residues. The segment covering 124–133 (PGQAAPAKKK) has biased composition (low complexity).

Belongs to the universal ribosomal protein uS12 family. Part of the 30S ribosomal subunit. Contacts proteins S8 and S17. May interact with IF1 in the 30S initiation complex.

With S4 and S5 plays an important role in translational accuracy. In terms of biological role, interacts with and stabilizes bases of the 16S rRNA that are involved in tRNA selection in the A site and with the mRNA backbone. Located at the interface of the 30S and 50S subunits, it traverses the body of the 30S subunit contacting proteins on the other side and probably holding the rRNA structure together. The combined cluster of proteins S8, S12 and S17 appears to hold together the shoulder and platform of the 30S subunit. This Bacteroides thetaiotaomicron (strain ATCC 29148 / DSM 2079 / JCM 5827 / CCUG 10774 / NCTC 10582 / VPI-5482 / E50) protein is Small ribosomal subunit protein uS12.